The chain runs to 353 residues: Thiamine-phosphate synthase (353 aa).

Residues 1–128 (MKSMPFAPIA…AASAAAIRYG (128 aa)) are unknown. Positions 129–353 (LYDLEVTVLQ…TSLQLLEALR (225 aa)) are thiamine-phosphate synthase. Residues 185–189 (QYRNK) and asparagine 217 contribute to the 4-amino-2-methyl-5-(diphosphooxymethyl)pyrimidine site. Mg(2+) contacts are provided by aspartate 218 and aspartate 237. Serine 256 is a binding site for 4-amino-2-methyl-5-(diphosphooxymethyl)pyrimidine. 282–284 (TAT) lines the 2-[(2R,5Z)-2-carboxy-4-methylthiazol-5(2H)-ylidene]ethyl phosphate pocket. Lysine 285 is a binding site for 4-amino-2-methyl-5-(diphosphooxymethyl)pyrimidine. Glycine 312 contacts 2-[(2R,5Z)-2-carboxy-4-methylthiazol-5(2H)-ylidene]ethyl phosphate.

The protein belongs to the thiamine-phosphate synthase family. It depends on Mg(2+) as a cofactor.

The catalysed reaction is 2-[(2R,5Z)-2-carboxy-4-methylthiazol-5(2H)-ylidene]ethyl phosphate + 4-amino-2-methyl-5-(diphosphooxymethyl)pyrimidine + 2 H(+) = thiamine phosphate + CO2 + diphosphate. It carries out the reaction 2-(2-carboxy-4-methylthiazol-5-yl)ethyl phosphate + 4-amino-2-methyl-5-(diphosphooxymethyl)pyrimidine + 2 H(+) = thiamine phosphate + CO2 + diphosphate. It catalyses the reaction 4-methyl-5-(2-phosphooxyethyl)-thiazole + 4-amino-2-methyl-5-(diphosphooxymethyl)pyrimidine + H(+) = thiamine phosphate + diphosphate. Its pathway is cofactor biosynthesis; thiamine diphosphate biosynthesis; thiamine phosphate from 4-amino-2-methyl-5-diphosphomethylpyrimidine and 4-methyl-5-(2-phosphoethyl)-thiazole: step 1/1. In terms of biological role, condenses 4-methyl-5-(beta-hydroxyethyl)thiazole monophosphate (THZ-P) and 2-methyl-4-amino-5-hydroxymethyl pyrimidine pyrophosphate (HMP-PP) to form thiamine monophosphate (TMP). The polypeptide is Thiamine-phosphate synthase (Prochlorococcus marinus (strain MIT 9313)).